A 79-amino-acid chain; its full sequence is Cyclotide phyb-A (79 aa).

Residues 1–43 (MVGVNSLRSALYLIVLILFVQLTYFSDARVMDVDLSRAFLPLT) constitute a propeptide that is removed on maturation. The segment at residues 44–73 (GIGCGESCVWIPCVSAAIGCSCSNKICYRN) is a cross-link (cyclopeptide (Gly-Asn)). 3 disulfide bridges follow: Cys47–Cys63, Cys51–Cys65, and Cys56–Cys70. Residues 74–79 (GIIPKK) constitute a propeptide that is removed on maturation.

Post-translationally, this is a cyclic peptide. Contains 3 disulfide bonds. As to expression, expressed in midvein, lamina and periphery of leaves (at protein level).

Probably participates in a plant defense mechanism. This Petunia hybrida (Petunia) protein is Cyclotide phyb-A.